Reading from the N-terminus, the 513-residue chain is GMP synthase [glutamine-hydrolyzing] (513 aa).

The Glutamine amidotransferase type-1 domain maps to 8 to 198 (MILVLDFGSQ…VFGVCDCEGK (191 aa)). Cys-85 serves as the catalytic Nucleophile. Catalysis depends on residues His-172 and Glu-174. Positions 199–388 (WSMENFIEIE…LGLPDDIVWR (190 aa)) constitute a GMPS ATP-PPase domain. ATP is bound at residue 226 to 232 (SGGVDSS).

As to quaternary structure, homodimer.

The catalysed reaction is XMP + L-glutamine + ATP + H2O = GMP + L-glutamate + AMP + diphosphate + 2 H(+). It functions in the pathway purine metabolism; GMP biosynthesis; GMP from XMP (L-Gln route): step 1/1. Its function is as follows. Catalyzes the synthesis of GMP from XMP. The chain is GMP synthase [glutamine-hydrolyzing] from Bacillus velezensis (strain DSM 23117 / BGSC 10A6 / LMG 26770 / FZB42) (Bacillus amyloliquefaciens subsp. plantarum).